The sequence spans 492 residues: N-succinylglutamate 5-semialdehyde dehydrogenase (492 aa).

220–225 (GSSTTG) is an NAD(+) binding site. Catalysis depends on residues Glu-243 and Cys-277.

It belongs to the aldehyde dehydrogenase family. AstD subfamily.

It carries out the reaction N-succinyl-L-glutamate 5-semialdehyde + NAD(+) + H2O = N-succinyl-L-glutamate + NADH + 2 H(+). It participates in amino-acid degradation; L-arginine degradation via AST pathway; L-glutamate and succinate from L-arginine: step 4/5. In terms of biological role, catalyzes the NAD-dependent reduction of succinylglutamate semialdehyde into succinylglutamate. The polypeptide is N-succinylglutamate 5-semialdehyde dehydrogenase (Klebsiella pneumoniae subsp. pneumoniae (strain ATCC 700721 / MGH 78578)).